A 327-amino-acid polypeptide reads, in one-letter code: Glycerol-3-phosphate dehydrogenase [NAD(P)+] (327 aa).

Tryptophan 11, arginine 30, and lysine 103 together coordinate NADPH. Sn-glycerol 3-phosphate-binding residues include lysine 103, glycine 131, and serine 133. Alanine 135 provides a ligand contact to NADPH. The sn-glycerol 3-phosphate site is built by lysine 186, aspartate 243, serine 253, arginine 254, and asparagine 255. The Proton acceptor role is filled by lysine 186. Arginine 254 serves as a coordination point for NADPH. Residues valine 281 and glutamate 283 each coordinate NADPH.

Belongs to the NAD-dependent glycerol-3-phosphate dehydrogenase family.

The protein localises to the cytoplasm. It carries out the reaction sn-glycerol 3-phosphate + NAD(+) = dihydroxyacetone phosphate + NADH + H(+). It catalyses the reaction sn-glycerol 3-phosphate + NADP(+) = dihydroxyacetone phosphate + NADPH + H(+). Its pathway is membrane lipid metabolism; glycerophospholipid metabolism. Functionally, catalyzes the reduction of the glycolytic intermediate dihydroxyacetone phosphate (DHAP) to sn-glycerol 3-phosphate (G3P), the key precursor for phospholipid synthesis. The polypeptide is Glycerol-3-phosphate dehydrogenase [NAD(P)+] (Wolbachia sp. subsp. Drosophila simulans (strain wRi)).